The following is a 642-amino-acid chain: Extracellular metalloproteinase 4 (642 aa).

The signal sequence occupies residues 1–18 (MHGLLLAGLLALPLNVLA). A propeptide spanning residues 19-253 (HPTESHSSGI…VHSVVDYVSA (235 aa)) is cleaved from the precursor. The segment covering 49–60 (SDSLTGQDGQSF) has biased composition (polar residues). The disordered stretch occupies residues 49-72 (SDSLTGQDGQSFTASSADADTSSG). Over residues 61-71 (TASSADADTSS) the composition is skewed to low complexity. Asparagine 419 is a glycosylation site (N-linked (GlcNAc...) asparagine). Histidine 436 contributes to the Zn(2+) binding site. Residue glutamate 437 is part of the active site. Histidine 440 contacts Zn(2+). 2 N-linked (GlcNAc...) asparagine glycosylation sites follow: asparagine 509 and asparagine 602.

It belongs to the peptidase M36 family. The cofactor is Zn(2+).

It is found in the secreted. Its function is as follows. Secreted metalloproteinase that allows assimilation of proteinaceous substrates and probably acts as a virulence factor. This chain is Extracellular metalloproteinase 4 (MEP4), found in Arthroderma gypseum (strain ATCC MYA-4604 / CBS 118893) (Microsporum gypseum).